The chain runs to 99 residues: Large ribosomal subunit protein eL21 (99 aa).

The segment covering 1 to 14 (MPNSNGPLSNSGGK) has biased composition (polar residues). Positions 1 to 38 (MPNSNGPLSNSGGKLQNDPRDRGTSPPQRAIADYDDGE) are disordered.

The protein belongs to the eukaryotic ribosomal protein eL21 family.

This Halobacterium salinarum (strain ATCC 29341 / DSM 671 / R1) protein is Large ribosomal subunit protein eL21.